Here is a 508-residue protein sequence, read N- to C-terminus: General transcription factor IIF subunit 1 (508 aa).

Alanine 2 bears the N-acetylalanine mark. Phosphothreonine is present on threonine 156. Residues 177-446 (MQQRRLKDQD…TPSSGDVQVT (270 aa)) are disordered. Serine 217, serine 218, serine 221, and serine 224 each carry phosphoserine. Over residues 232-251 (SKAKKKAPVTKAGRKKKKKK) the composition is skewed to basic residues. Composition is skewed to acidic residues over residues 255–270 (DEAF…EGQE) and 303–325 (EQSE…EEEE). The residue at position 331 (threonine 331) is a Phosphothreonine. Acidic residues predominate over residues 343–355 (DDSDSSEESDIDS). Residues 364–374 (AKKKTPPKRER) are compositionally biased toward basic residues. Phosphoserine occurs at positions 377, 380, 381, and 385. Residues 378–388 (GGSSKGTSRPG) are compositionally biased toward polar residues. Threonine 389 bears the Phosphothreonine mark. A compositionally biased stretch (low complexity) spans 389–406 (TPSAEAASTSSTLRAAAS). Serine 391 bears the Phosphoserine mark. Position 407 is an N6-acetyllysine (lysine 407). The segment covering 428 to 443 (GPQSLSGKSTPSSGDV) has biased composition (polar residues). Serine 431, serine 433, and serine 436 each carry phosphoserine. Threonine 437 carries the phosphothreonine modification. At serine 440 the chain carries Phosphoserine.

This sequence belongs to the TFIIF alpha subunit family. As to quaternary structure, heterodimer of an alpha and a beta subunit. Interacts with GTF2F2, CTDP1, TAF6/TAFII80 and URI1. Interacts with GTF2B (via C-terminus and preferentially via acetylated form); this interaction prevents binding of GTF2B to GTF2F2. Part of TBP-based Pol II pre-initiation complex (PIC), in which Pol II core assembles with general transcription factors and other specific initiation factors including GTF2E1, GTF2E2, GTF2F1, GTF2F2, TCEA1, ERCC2, ERCC3, GTF2H2, GTF2H3, GTF2H4, GTF2H5, GTF2A1, GTF2A2, GTF2B and TBP; this large multi-subunit PIC complex mediates DNA unwinding and targets Pol II core to the transcription start site where the first phosphodiester bond forms. In terms of processing, phosphorylated on Ser and other residues by TAF1 and casein kinase II-like kinases.

Its subcellular location is the nucleus. Its function is as follows. TFIIF is a general transcription initiation factor that binds to RNA polymerase II and helps to recruit it to the initiation complex in collaboration with TFIIB. It promotes transcription elongation. In Mus musculus (Mouse), this protein is General transcription factor IIF subunit 1 (Gtf2f1).